We begin with the raw amino-acid sequence, 68 residues long: Conotoxin Lt5.2 (68 aa).

A signal peptide spans 1 to 19 (MLCLPVFIILLLLASPAAP). The propeptide occupies 20 to 54 (KSLETRIQNDLIRAGLTDADLKTEKGFLSGLLNVA).

It belongs to the conotoxin T superfamily. Post-translationally, contains 2 disulfide bonds that can be either 'C1-C3, C2-C4' or 'C1-C4, C2-C3', since these disulfide connectivities have been observed for conotoxins with cysteine framework V (for examples, see AC P0DQQ7 and AC P81755). In terms of tissue distribution, expressed by the venom duct.

The protein resides in the secreted. The protein is Conotoxin Lt5.2 of Conus litteratus (Lettered cone).